Reading from the N-terminus, the 253-residue chain is Tryptophan synthase alpha chain (253 aa).

Residues Glu-45 and Asp-56 each act as proton acceptor in the active site.

This sequence belongs to the TrpA family. In terms of assembly, tetramer of two alpha and two beta chains.

The catalysed reaction is (1S,2R)-1-C-(indol-3-yl)glycerol 3-phosphate + L-serine = D-glyceraldehyde 3-phosphate + L-tryptophan + H2O. Its pathway is amino-acid biosynthesis; L-tryptophan biosynthesis; L-tryptophan from chorismate: step 5/5. Functionally, the alpha subunit is responsible for the aldol cleavage of indoleglycerol phosphate to indole and glyceraldehyde 3-phosphate. The sequence is that of Tryptophan synthase alpha chain from Flavobacterium johnsoniae (strain ATCC 17061 / DSM 2064 / JCM 8514 / BCRC 14874 / CCUG 350202 / NBRC 14942 / NCIMB 11054 / UW101) (Cytophaga johnsonae).